Consider the following 251-residue polypeptide: Triosephosphate isomerase (251 aa).

Substrate is bound at residue 9–11; the sequence is NWK. Histidine 95 (electrophile) is an active-site residue. Glutamate 167 functions as the Proton acceptor in the catalytic mechanism. Residues glycine 173, serine 213, and 234 to 235 contribute to the substrate site; that span reads GG. Serine 213 bears the Phosphoserine mark.

It belongs to the triosephosphate isomerase family. As to quaternary structure, homodimer.

The protein resides in the cytoplasm. The catalysed reaction is D-glyceraldehyde 3-phosphate = dihydroxyacetone phosphate. It functions in the pathway carbohydrate biosynthesis; gluconeogenesis. It participates in carbohydrate degradation; glycolysis; D-glyceraldehyde 3-phosphate from glycerone phosphate: step 1/1. Its function is as follows. Involved in the gluconeogenesis. Catalyzes stereospecifically the conversion of dihydroxyacetone phosphate (DHAP) to D-glyceraldehyde-3-phosphate (G3P). The chain is Triosephosphate isomerase from Halalkalibacterium halodurans (strain ATCC BAA-125 / DSM 18197 / FERM 7344 / JCM 9153 / C-125) (Bacillus halodurans).